The following is a 350-amino-acid chain: Secreted effector protein PipB2 (350 aa).

4 consecutive Pentapeptide repeat domains span residues 162–201 (ANLTAENLCDADLSGANLEGAVLFMADCEGANFKGANLSG), 202–241 (TSLGDSNFKNACLEDSIMCGATLDHANLTGANLQHASLLG), 247–286 (CNCSGANMDHTNLSGATLIRADMSGATLQGATIMAAIMED), and 287–326 (AVLTRANLRKASFISTNLDGADLAEANLNNTCFKDCTLTH).

In terms of assembly, interacts with the host kinesin light chain (KLC), a subunit of the kinesin-1 motor complex.

It localises to the secreted. The protein localises to the host membrane. Its function is as follows. Effector proteins function to alter host cell physiology and promote bacterial survival in host tissues. Involved in the reorganization of late endosome/lysosome (LE/Lys) compartments in mammalian cells. Necessary and sufficient to link kinesin-1 onto the Salmonella-containing vacuole (SCV) membrane. Required for centrifugal extension of lysosomal glycoprotein-rich membrane tubules, known as Salmonella-induced filaments (Sifs), away from the SCV and toward the cell periphery. Required for virulence, but not for intracellular survival and replication in phagocytic cells. The chain is Secreted effector protein PipB2 (pipB2) from Salmonella choleraesuis (strain SC-B67).